The chain runs to 83 residues: Short neurotoxin OKI-01/OKI-19 (83 aa).

The N-terminal stretch at 1–21 (MKTLLLTLVVVTIVCLDLGYT) is a signal peptide. 4 disulfide bridges follow: cysteine 24/cysteine 45, cysteine 38/cysteine 62, cysteine 64/cysteine 75, and cysteine 76/cysteine 81.

The protein belongs to the three-finger toxin family. Short-chain subfamily. Type I alpha-neurotoxin sub-subfamily. In terms of tissue distribution, expressed by the venom gland.

Its subcellular location is the secreted. Its function is as follows. Binds to muscle nicotinic acetylcholine receptor (nAChR) and inhibit acetylcholine from binding to the receptor, thereby impairing neuromuscular transmission. This Laticauda laticaudata (Blue-ringed sea krait) protein is Short neurotoxin OKI-01/OKI-19.